We begin with the raw amino-acid sequence, 466 residues long: Voltage-gated potassium channel regulatory subunit KCNG2 (466 aa).

The Cytoplasmic portion of the chain corresponds to Met-1–Leu-174. The interval Ala-131–Arg-155 is disordered. A helical membrane pass occupies residues Ala-175–Leu-196. Residues Ser-197–Ser-217 lie on the Extracellular side of the membrane. Residues Leu-218–Gln-239 form a helical membrane-spanning segment. At Ala-240–Pro-250 the chain is on the cytoplasmic side. A helical membrane pass occupies residues Leu-251–Ala-271. Residues Ala-272 to Ala-283 are Extracellular-facing. A helical; Voltage-sensor membrane pass occupies residues Gly-284–His-304. Over Ser-305–Ala-319 the chain is Cytoplasmic. A helical membrane pass occupies residues Arg-320–His-341. The Extracellular portion of the chain corresponds to Leu-342 to Val-356. Residues Pro-357–Thr-368 constitute an intramembrane region (helical). A Selectivity filter motif is present at residues Thr-369 to Asp-374. An intramembrane segment occupies Thr-369–Val-376. Residues Pro-377–Gln-383 are Extracellular-facing. Residues Val-384–Tyr-412 traverse the membrane as a helical segment. Residues Ser-413 to Arg-466 lie on the Cytoplasmic side of the membrane. A disordered region spans residues Lys-416–Arg-466. Polar residues predominate over residues His-435 to Pro-447. Low complexity predominate over residues Asp-448 to Leu-460.

The protein belongs to the potassium channel family. G (TC 1.A.1.2) subfamily. Kv6.2/KCNG2 sub-subfamily. As to quaternary structure, heterodimer with KCNB1. As to expression, highly expressed in heart, liver, skeletal muscle, kidney and pancreas. Detected at low levels in brain, lung and placenta.

The protein resides in the cell membrane. Its function is as follows. Regulatory alpha-subunit of the voltage-gated potassium (Kv) channel which, when coassembled with KCNB1, can modulate the kinetics and conductance-voltage relationship. Modulates channel activity by shifting the threshold and the half-maximal activation to more negative values. Potassium channel subunit that does not form functional channels by itself. This is Voltage-gated potassium channel regulatory subunit KCNG2 from Homo sapiens (Human).